A 165-amino-acid polypeptide reads, in one-letter code: Phosphopantetheine adenylyltransferase (165 aa).

Thr-9 is a binding site for substrate. ATP is bound by residues 9–10 (TF) and His-17. The substrate site is built by Lys-41, Leu-73, and Arg-87. ATP-binding positions include 88–90 (GLR), Glu-98, and 123–129 (YMFISAT).

This sequence belongs to the bacterial CoaD family. Homohexamer. Mg(2+) is required as a cofactor.

It localises to the cytoplasm. It carries out the reaction (R)-4'-phosphopantetheine + ATP + H(+) = 3'-dephospho-CoA + diphosphate. Its pathway is cofactor biosynthesis; coenzyme A biosynthesis; CoA from (R)-pantothenate: step 4/5. In terms of biological role, reversibly transfers an adenylyl group from ATP to 4'-phosphopantetheine, yielding dephospho-CoA (dPCoA) and pyrophosphate. The protein is Phosphopantetheine adenylyltransferase of Nitrosospira multiformis (strain ATCC 25196 / NCIMB 11849 / C 71).